A 397-amino-acid chain; its full sequence is Ribosomal RNA large subunit methyltransferase I (397 aa).

The PUA domain occupies Thr2–Lys82.

This sequence belongs to the methyltransferase superfamily. RlmI family.

The protein resides in the cytoplasm. It carries out the reaction cytidine(1962) in 23S rRNA + S-adenosyl-L-methionine = 5-methylcytidine(1962) in 23S rRNA + S-adenosyl-L-homocysteine + H(+). In terms of biological role, specifically methylates the cytosine at position 1962 (m5C1962) of 23S rRNA. The polypeptide is Ribosomal RNA large subunit methyltransferase I (Photobacterium profundum (strain SS9)).